Here is a 434-residue protein sequence, read N- to C-terminus: Protein HEAT INTOLERANT 4 (434 aa).

The Nuclear localization signal 1 signature appears at 1–8 (MKKGAKRK). Basic residues predominate over residues 1 to 15 (MKKGAKRKGVSKAGR). Positions 1 to 131 (MKKGAKRKGV…PVPKAKKPRA (131 aa)) are disordered. Over residues 30–53 (ETTKTTQEESQQHEEEVVDEVKEN) the composition is skewed to basic and acidic residues. Over residues 54 to 82 (GEEEEAKGDQEEEEDAKPDSLEEDEENQE) the composition is skewed to acidic residues. The span at 83-98 (DEVKAEEVKEEVEKKP) shows a compositional bias: basic and acidic residues. The short motif at 95–102 (EKKPVARR) is the Nuclear localization signal 2 element. Residues 99 to 110 (VARRGGKRKRAT) are compositionally biased toward basic residues. A compositionally biased stretch (basic and acidic residues) spans 111 to 122 (KKDTEIKDEKKP). The stretch at 363–394 (VKEQVRAAKKANREAKDARKKAIEEMSEDTKQ) forms a coiled coil. Residues 370–377 (AKKANREA) carry the Nuclear localization signal 3 motif.

It localises to the nucleus. It is found in the nucleolus. Functionally, essential protein required for basal thermotolerance, especially during heat-induced chromocentre decondensation, thus regulating transcriptional gene silencing (TGS). The protein is Protein HEAT INTOLERANT 4 of Arabidopsis thaliana (Mouse-ear cress).